The following is a 100-amino-acid chain: Urease subunit gamma (100 aa).

This sequence belongs to the urease gamma subunit family. In terms of assembly, heterotrimer of UreA (gamma), UreB (beta) and UreC (alpha) subunits. Three heterotrimers associate to form the active enzyme.

The protein localises to the cytoplasm. The enzyme catalyses urea + 2 H2O + H(+) = hydrogencarbonate + 2 NH4(+). The protein operates within nitrogen metabolism; urea degradation; CO(2) and NH(3) from urea (urease route): step 1/1. The sequence is that of Urease subunit gamma from Prochlorococcus marinus subsp. pastoris (strain CCMP1986 / NIES-2087 / MED4).